Here is a 353-residue protein sequence, read N- to C-terminus: Peptide methionine sulfoxide reductase MsrA/MsrB (353 aa).

A peptide methionine sulfoxide reductase A region spans residues 43 to 196; sequence REIYLAGGCF…PNGYCHIDIT (154 aa). The active site involves cysteine 51. Residues 213–336 enclose the MsrB domain; the sequence is DAELKAKLTP…NSASIKFIPL (124 aa). The active-site Nucleophile is cysteine 325.

In the N-terminal section; belongs to the MsrA Met sulfoxide reductase family. The protein in the C-terminal section; belongs to the MsrB Met sulfoxide reductase family.

The enzyme catalyses L-methionyl-[protein] + [thioredoxin]-disulfide + H2O = L-methionyl-(S)-S-oxide-[protein] + [thioredoxin]-dithiol. It carries out the reaction [thioredoxin]-disulfide + L-methionine + H2O = L-methionine (S)-S-oxide + [thioredoxin]-dithiol. The catalysed reaction is L-methionyl-[protein] + [thioredoxin]-disulfide + H2O = L-methionyl-(R)-S-oxide-[protein] + [thioredoxin]-dithiol. In terms of biological role, has an important function as a repair enzyme for proteins that have been inactivated by oxidation. Catalyzes the reversible oxidation-reduction of methionine sulfoxide in proteins to methionine. The polypeptide is Peptide methionine sulfoxide reductase MsrA/MsrB (msrAB) (Haemophilus influenzae (strain ATCC 51907 / DSM 11121 / KW20 / Rd)).